A 131-amino-acid chain; its full sequence is Histone H2A.2 (131 aa).

The disordered stretch occupies residues 1 to 22; that stretch reads MSGGKGKAGSSEKASTSRSAKA. N-acetylserine is present on Ser-2. Residues Lys-5 and Lys-7 each carry the N6-acetyllysine modification. Gln-105 bears the N5-methylglutamine mark. A Glycyl lysine isopeptide (Lys-Gly) (interchain with G-Cter in SUMO) cross-link involves residue Lys-126. Ser-128 carries the post-translational modification Phosphoserine. The [ST]-Q motif motif lies at 128–129; sequence SQ.

The protein belongs to the histone H2A family. The nucleosome is a histone octamer containing two molecules each of H2A, H2B, H3 and H4 assembled in one H3-H4 heterotetramer and two H2A-H2B heterodimers. The octamer wraps approximately 147 bp of DNA. Phosphorylated to form H2AS128ph (gamma-H2A) in response to DNA double-strand breaks (DSBs) generated by exogenous genotoxic agents and by stalled replication forks. Phosphorylation is dependent on the DNA damage checkpoint kinases MEC1/ATR and TEL1/ATM, spreads on either side of a detected DSB site and may mark the surrounding chromatin for recruitment of proteins required for DNA damage signaling and repair. Gamma-H2A is removed from the DNA prior to the strand invasion-primer extension step of the repair process and subsequently dephosphorylated. Dephosphorylation is necessary for efficient recovery from the DNA damage checkpoint. Post-translationally, acetylated by ESA1 to form H2AK4ac and H2AK7ac.

The protein resides in the nucleus. The protein localises to the chromosome. In terms of biological role, core component of nucleosome which plays a central role in DNA double strand break (DSB) repair. Nucleosomes wrap and compact DNA into chromatin, limiting DNA accessibility to the cellular machineries which require DNA as a template. Histones thereby play a central role in transcription regulation, DNA repair, DNA replication and chromosomal stability. DNA accessibility is regulated via a complex set of post-translational modifications of histones, also called histone code, and nucleosome remodeling. The chain is Histone H2A.2 (HTA2) from Scheffersomyces stipitis (strain ATCC 58785 / CBS 6054 / NBRC 10063 / NRRL Y-11545) (Yeast).